The following is a 107-amino-acid chain: Putative double-stranded DNA mimic protein CGSHiGG_01135 (107 aa).

It belongs to the putative dsDNA mimic protein family.

Functionally, may act as a double-stranded DNA (dsDNA) mimic. Probably regulates the activity of a dsDNA-binding protein. This chain is Putative double-stranded DNA mimic protein CGSHiGG_01135, found in Haemophilus influenzae (strain PittGG).